Consider the following 291-residue polypeptide: Regulator of rDNA transcription protein 5 (291 aa).

The RRM 1 domain maps to 21–104 (KRIYISNLDF…RTLKIKMYVP (84 aa)). The disordered stretch occupies residues 109 to 151 (ARAERRKEKRKVPAPQAEENPDAAPQDAQQPQPPAPAEEPTSK). One can recognise an RRM 2 domain in the interval 152–235 (DTVYCAYLPS…KKITLRPARL (84 aa)). The disordered stretch occupies residues 271-291 (HRQQEAEIPAAETPDDVAATA).

This sequence belongs to the RRT5 family.

May be involved in the modulation of rDNA transcription. This chain is Regulator of rDNA transcription protein 5 (RRT5), found in Lachancea thermotolerans (strain ATCC 56472 / CBS 6340 / NRRL Y-8284) (Yeast).